We begin with the raw amino-acid sequence, 349 residues long: 6-phosphogluconolactonase (349 aa).

Residues 125–151 form a disordered region; that stretch reads LQSPVSEAAHTGKGPHERQEKPHTHYA. Positions 138 to 147 are enriched in basic and acidic residues; the sequence is GPHERQEKPH.

The protein belongs to the cycloisomerase 2 family.

It carries out the reaction 6-phospho-D-glucono-1,5-lactone + H2O = 6-phospho-D-gluconate + H(+). It participates in carbohydrate degradation; pentose phosphate pathway; D-ribulose 5-phosphate from D-glucose 6-phosphate (oxidative stage): step 2/3. In terms of biological role, catalyzes the hydrolysis of 6-phosphogluconolactone to 6-phosphogluconate. The chain is 6-phosphogluconolactonase (pgl) from Bacillus subtilis (strain 168).